A 275-amino-acid chain; its full sequence is Putative ankyrin repeat protein L715 (275 aa).

ANK repeat units follow at residues asparagine 94–tyrosine 123, asparagine 124–aspartate 153, isoleucine 155–proline 183, and isoleucine 184–threonine 213. Residues asparagine 253–asparagine 275 are disordered. A compositionally biased stretch (acidic residues) spans aspartate 255–asparagine 275.

The polypeptide is Putative ankyrin repeat protein L715 (Acanthamoeba polyphaga mimivirus (APMV)).